The primary structure comprises 70 residues: Homeobox protein CDX (70 aa).

Residues 1-60 constitute a DNA-binding region (homeobox); that stretch reads PDKYRVVYTDYQRLELEKEFHYSRYITMNRKAELAKSLDLTERQIKIWFQNRRAKERKIN.

It belongs to the Caudal homeobox family.

Its subcellular location is the nucleus. The polypeptide is Homeobox protein CDX (CDX) (Lineus sanguineus (Ribbon worm)).